An 89-amino-acid polypeptide reads, in one-letter code: Co-chaperonin GroES (89 aa).

It belongs to the GroES chaperonin family. As to quaternary structure, heptamer of 7 subunits arranged in a ring. Interacts with the chaperonin GroEL.

It localises to the cytoplasm. Its function is as follows. Together with the chaperonin GroEL, plays an essential role in assisting protein folding. The GroEL-GroES system forms a nano-cage that allows encapsulation of the non-native substrate proteins and provides a physical environment optimized to promote and accelerate protein folding. GroES binds to the apical surface of the GroEL ring, thereby capping the opening of the GroEL channel. In Petrotoga mobilis (strain DSM 10674 / SJ95), this protein is Co-chaperonin GroES.